The following is a 406-amino-acid chain: Tryptophan 2,3-dioxygenase (406 aa).

Substrate is bound by residues 72–76 (FIVTH) and Arg-144. His-328 is a heme binding site. Thr-342 provides a ligand contact to substrate.

The protein belongs to the tryptophan 2,3-dioxygenase family. Homotetramer. Dimer of dimers. It depends on heme as a cofactor.

It carries out the reaction L-tryptophan + O2 = N-formyl-L-kynurenine. It participates in amino-acid degradation; L-tryptophan degradation via kynurenine pathway; L-kynurenine from L-tryptophan: step 1/2. In terms of biological role, heme-dependent dioxygenase that catalyzes the oxidative cleavage of the L-tryptophan (L-Trp) pyrrole ring and converts L-tryptophan to N-formyl-L-kynurenine. Catalyzes the oxidative cleavage of the indole moiety. The polypeptide is Tryptophan 2,3-dioxygenase (Xenopus laevis (African clawed frog)).